Here is a 205-residue protein sequence, read N- to C-terminus: dITP/XTP pyrophosphatase (205 aa).

Residue 11-16 (TKNMGK) coordinates substrate. The Mg(2+) site is built by Glu44 and Asp73. Asp73 acts as the Proton acceptor in catalysis. Residues Ser74, 158 to 161 (FGYD), Lys181, and 186 to 187 (HR) contribute to the substrate site.

This sequence belongs to the HAM1 NTPase family. As to quaternary structure, homodimer. Requires Mg(2+) as cofactor.

It carries out the reaction XTP + H2O = XMP + diphosphate + H(+). The catalysed reaction is dITP + H2O = dIMP + diphosphate + H(+). The enzyme catalyses ITP + H2O = IMP + diphosphate + H(+). Functionally, pyrophosphatase that catalyzes the hydrolysis of nucleoside triphosphates to their monophosphate derivatives, with a high preference for the non-canonical purine nucleotides XTP (xanthosine triphosphate), dITP (deoxyinosine triphosphate) and ITP. Seems to function as a house-cleaning enzyme that removes non-canonical purine nucleotides from the nucleotide pool, thus preventing their incorporation into DNA/RNA and avoiding chromosomal lesions. The chain is dITP/XTP pyrophosphatase from Bacillus thuringiensis subsp. konkukian (strain 97-27).